The primary structure comprises 638 residues: Threonine--tRNA ligase (638 aa).

Positions 1–61 constitute a TGS domain; sequence MPIITLPDGS…NKDSKVVIIT (61 aa). The interval 242 to 533 is catalytic; sequence DHRKLGKKHS…LIEQYEAKFP (292 aa). The Zn(2+) site is built by cysteine 333, histidine 384, and histidine 510.

This sequence belongs to the class-II aminoacyl-tRNA synthetase family. As to quaternary structure, homodimer. Requires Zn(2+) as cofactor.

The protein localises to the cytoplasm. The catalysed reaction is tRNA(Thr) + L-threonine + ATP = L-threonyl-tRNA(Thr) + AMP + diphosphate + H(+). Catalyzes the attachment of threonine to tRNA(Thr) in a two-step reaction: L-threonine is first activated by ATP to form Thr-AMP and then transferred to the acceptor end of tRNA(Thr). Also edits incorrectly charged L-seryl-tRNA(Thr). The polypeptide is Threonine--tRNA ligase (Prochlorococcus marinus (strain AS9601)).